The chain runs to 460 residues: tRNA modification GTPase MnmE (460 aa).

R26, E88, and R127 together coordinate (6S)-5-formyl-5,6,7,8-tetrahydrofolate. One can recognise a TrmE-type G domain in the interval 222–381; the sequence is GLKVAIVGRP…LESAILSKVQ (160 aa). Position 232 (N232) interacts with K(+). Residues 232–237, 251–257, and 276–279 contribute to the GTP site; these read NVGKSS, TELPGTT, and DTAG. S236 is a binding site for Mg(2+). Residues T251, L253, and T256 each coordinate K(+). Residue T257 coordinates Mg(2+). Residue K460 participates in (6S)-5-formyl-5,6,7,8-tetrahydrofolate binding.

It belongs to the TRAFAC class TrmE-Era-EngA-EngB-Septin-like GTPase superfamily. TrmE GTPase family. In terms of assembly, homodimer. Heterotetramer of two MnmE and two MnmG subunits. Requires K(+) as cofactor.

Its subcellular location is the cytoplasm. Functionally, exhibits a very high intrinsic GTPase hydrolysis rate. Involved in the addition of a carboxymethylaminomethyl (cmnm) group at the wobble position (U34) of certain tRNAs, forming tRNA-cmnm(5)s(2)U34. The protein is tRNA modification GTPase MnmE of Cyanothece sp. (strain PCC 7425 / ATCC 29141).